Reading from the N-terminus, the 140-residue chain is Phosphoribosyl-AMP cyclohydrolase (140 aa).

Position 84 (D84) interacts with Mg(2+). C85 is a Zn(2+) binding site. Positions 86 and 88 each coordinate Mg(2+). Zn(2+)-binding residues include C101 and C108.

It belongs to the PRA-CH family. Homodimer. Mg(2+) serves as cofactor. It depends on Zn(2+) as a cofactor.

The protein localises to the cytoplasm. It carries out the reaction 1-(5-phospho-beta-D-ribosyl)-5'-AMP + H2O = 1-(5-phospho-beta-D-ribosyl)-5-[(5-phospho-beta-D-ribosylamino)methylideneamino]imidazole-4-carboxamide. It participates in amino-acid biosynthesis; L-histidine biosynthesis; L-histidine from 5-phospho-alpha-D-ribose 1-diphosphate: step 3/9. Its function is as follows. Catalyzes the hydrolysis of the adenine ring of phosphoribosyl-AMP. In Chloroherpeton thalassium (strain ATCC 35110 / GB-78), this protein is Phosphoribosyl-AMP cyclohydrolase.